Reading from the N-terminus, the 374-residue chain is Queuine tRNA-ribosyltransferase (374 aa).

The active-site Proton acceptor is the Asp89. Substrate-binding positions include 89–93 (DSGGF), Asp143, Gln187, and Gly214. Residues 245-251 (GVGKPED) are RNA binding. The active-site Nucleophile is Asp264. Residues 269–273 (TRNAR) are RNA binding; important for wobble base 34 recognition. 4 residues coordinate Zn(2+): Cys302, Cys304, Cys307, and His333.

The protein belongs to the queuine tRNA-ribosyltransferase family. As to quaternary structure, homodimer. Within each dimer, one monomer is responsible for RNA recognition and catalysis, while the other monomer binds to the replacement base PreQ1. It depends on Zn(2+) as a cofactor.

The catalysed reaction is 7-aminomethyl-7-carbaguanine + guanosine(34) in tRNA = 7-aminomethyl-7-carbaguanosine(34) in tRNA + guanine. It functions in the pathway tRNA modification; tRNA-queuosine biosynthesis. In terms of biological role, catalyzes the base-exchange of a guanine (G) residue with the queuine precursor 7-aminomethyl-7-deazaguanine (PreQ1) at position 34 (anticodon wobble position) in tRNAs with GU(N) anticodons (tRNA-Asp, -Asn, -His and -Tyr). Catalysis occurs through a double-displacement mechanism. The nucleophile active site attacks the C1' of nucleotide 34 to detach the guanine base from the RNA, forming a covalent enzyme-RNA intermediate. The proton acceptor active site deprotonates the incoming PreQ1, allowing a nucleophilic attack on the C1' of the ribose to form the product. After dissociation, two additional enzymatic reactions on the tRNA convert PreQ1 to queuine (Q), resulting in the hypermodified nucleoside queuosine (7-(((4,5-cis-dihydroxy-2-cyclopenten-1-yl)amino)methyl)-7-deazaguanosine). This Yersinia pseudotuberculosis serotype O:1b (strain IP 31758) protein is Queuine tRNA-ribosyltransferase.